Consider the following 883-residue polypeptide: Glutamate receptor 2 (883 aa).

A signal peptide spans 1–21 (MQKIMHISVLLSPVLWGLIFG). The Extracellular portion of the chain corresponds to 22-543 (VSSNSIQIGG…GVFSFLDPLA (522 aa)). Cysteines 78 and 330 form a disulfide. 4 N-linked (GlcNAc...) asparagine glycosylation sites follow: Asn-256, Asn-370, Asn-406, and Asn-413. Residues Pro-499, Thr-501, and Arg-506 each coordinate L-glutamate. A helical membrane pass occupies residues 544–564 (YEIWMCIVFAYIGVSVVLFLV). At 565 to 591 (SRFSPYEWHTEEFEDGRETQSSESTNE) the chain is on the cytoplasmic side. The helical; Pore-forming intramembrane region spans 592 to 607 (FGIFNSLWFSLGAFMQ). An intramembrane segment occupies 608-610 (QGC). Residue Cys-610 is the site of S-palmitoyl cysteine attachment. Residues 611–616 (DISPRS) lie on the Cytoplasmic side of the membrane. A helical transmembrane segment spans residues 617–637 (LSGRIVGGVWWFFTLIIISSY). Residues 638 to 812 (TANLAAFLTV…EKTSALSLSN (175 aa)) are Extracellular-facing. Ser-675 and Thr-676 together coordinate L-glutamate. At Ser-683 the chain carries Phosphoserine; by PKC. Ser-717 bears the Phosphoserine; by PKG mark. L-glutamate is bound at residue Glu-726. An intrachain disulfide couples Cys-739 to Cys-794. Residues 813–833 (VAGVFYILVGGLGLAMLVALI) form a helical membrane-spanning segment. At 834 to 883 (EFCYKSRAEAKRMKVAKNPQNINPSSSQNSQNFATYKEGYNVYGIESVKI) the chain is on the cytoplasmic side. A lipid anchor (S-palmitoyl cysteine) is attached at Cys-836. Phosphoserine is present on residues Ser-860 and Ser-863. Positions 867 to 877 (ATYKEGYNVYG) are required for interaction with IQSEC1. Tyr-876 carries the phosphotyrosine modification. At Ser-880 the chain carries Phosphoserine.

This sequence belongs to the glutamate-gated ion channel (TC 1.A.10.1) family. GRIA2 subfamily. In terms of assembly, homotetramer or heterotetramer of pore-forming glutamate receptor subunits. Tetramers may be formed by the dimerization of dimers. May interact with MPP4. Forms a ternary complex with GRIP1 and CSPG4. Interacts with ATAD1 in an ATP-dependent manner. ATAD1-catalyzed ATP hydrolysis disrupts binding to ATAD1 and to GRIP1 and leads to AMPAR complex disassembly. Interacts with GRIP2. Interacts with GRIP1. Interacts with NSF via its C-terminus. Interacts with CACNG2, PICK1 and GRIP2. Interacts with GRIA1 and SYNDIG1. Part of a complex containing GRIA2, NSF and NAPA and/or NAPB. Interacts with SNX27 (via PDZ domain); the interaction is required for recycling to the plasma membrane when endocytosed and prevent degradation in lysosomes. Interacts with LRFN1. Found in a complex with GRIA1, GRIA3, GRIA4, CNIH2, CNIH3, CACNG2, CACNG3, CACNG4, CACNG5, CACNG7 and CACNG8. Interacts with CACNG5. Interacts with OLFM2. Interacts with AP4B1, AP4E1 and AP4M1; probably indirect it mediates the somatodendritic localization of GRIA2 in neurons. Forms a complex with GRIP1, NSG1 and STX12; controls the intracellular fate of AMPAR and the endosomal sorting of the GRIA2 subunit toward recycling and membrane targeting. Interacts with IQSEC1; the interaction is required for ARF6 activation. Interacts (heterotetramer form) with CNIH2 and CNIH3; this interaction promotes expression at the plasma membrane and extensively modulates their gating properties by slowing deactivation and desensitization kinetics. In terms of processing, palmitoylated. Depalmitoylated upon L-glutamate stimulation. Cys-610 palmitoylation leads to Golgi retention and decreased cell surface expression. In contrast, Cys-836 palmitoylation does not affect cell surface expression but regulates stimulation-dependent endocytosis. Post-translationally, phosphorylation at Tyr-876 is required for interaction with IQSEC1 and ARF6 activation, which in turn triggers AMPAR internalization for persistent synaptic depression. Ubiquitinated by RNF167, leading to its degradation. In terms of processing, N-glycosylated. As to expression, detected in forebrain. Detected in dendrites of neuronal cells. Expressed in the pyramidal cell layers of CA1 and CA3 and in the granule cell layer of the dentate gyrus.

The protein localises to the cell membrane. It is found in the postsynaptic cell membrane. It localises to the postsynaptic density membrane. It catalyses the reaction Ca(2+)(in) = Ca(2+)(out). The enzyme catalyses Na(+)(in) = Na(+)(out). Functionally, ionotropic glutamate receptor that functions as a ligand-gated cation channel, gated by L-glutamate and glutamatergic agonists such as alpha-amino-3-hydroxy-5-methyl-4-isoxazolepropionic acid (AMPA), quisqualic acid, and kainic acid. L-glutamate acts as an excitatory neurotransmitter at many synapses in the central nervous system and plays an important role in fast excitatory synaptic transmission. Binding of the excitatory neurotransmitter L-glutamate induces a conformation change, leading to the opening of the cation channel, and thereby converts the chemical signal to an electrical impulse upon entry of monovalent and divalent cations such as sodium and calcium. The receptor then desensitizes rapidly and enters in a transient inactive state, characterized by the presence of bound agonist. In the presence of CACNG4 or CACNG7 or CACNG8, shows resensitization which is characterized by a delayed accumulation of current flux upon continued application of L-glutamate. Through complex formation with NSG1, GRIP1 and STX12 controls the intracellular fate of AMPAR and the endosomal sorting of the GRIA2 subunit toward recycling and membrane targeting. In Rattus norvegicus (Rat), this protein is Glutamate receptor 2.